The chain runs to 427 residues: GTPase Obg (427 aa).

The 158-residue stretch at 1–158 (MFVDIAKIYV…LWVILELKVL (158 aa)) folds into the Obg domain. The OBG-type G domain occupies 159–330 (ADVGLIGYPN…VLKRAYELLK (172 aa)). GTP is bound by residues 165-172 (GYPNVGKS), 190-194 (FTTKY), 212-215 (DIPG), 282-285 (NKMD), and 311-313 (SAA). Ser-172 and Thr-192 together coordinate Mg(2+). The OCT domain occupies 347 to 427 (FVYYKKKDVK…ILDVEFEYYE (81 aa)).

It belongs to the TRAFAC class OBG-HflX-like GTPase superfamily. OBG GTPase family. As to quaternary structure, monomer. Mg(2+) serves as cofactor.

Its subcellular location is the cytoplasm. In terms of biological role, an essential GTPase which binds GTP, GDP and possibly (p)ppGpp with moderate affinity, with high nucleotide exchange rates and a fairly low GTP hydrolysis rate. Plays a role in control of the cell cycle, stress response, ribosome biogenesis and in those bacteria that undergo differentiation, in morphogenesis control. This chain is GTPase Obg, found in Caldicellulosiruptor bescii (strain ATCC BAA-1888 / DSM 6725 / KCTC 15123 / Z-1320) (Anaerocellum thermophilum).